The chain runs to 166 residues: Regulatory protein RecX (166 aa).

This sequence belongs to the RecX family.

It localises to the cytoplasm. In terms of biological role, modulates RecA activity. This Salmonella arizonae (strain ATCC BAA-731 / CDC346-86 / RSK2980) protein is Regulatory protein RecX.